The following is a 248-amino-acid chain: uncharacterized protein (248 aa).

Residues 7–25 traverse the membrane as a helical segment; it reads TIFIGGIYGLGVYIGAVAW.

This sequence belongs to the methyltransferase superfamily. METL family.

Its subcellular location is the mitochondrion inner membrane. Probable methyltransferase. This is an uncharacterized protein from Schizosaccharomyces pombe (strain 972 / ATCC 24843) (Fission yeast).